Reading from the N-terminus, the 92-residue chain is Protein RnfH (92 aa).

Belongs to the UPF0125 (RnfH) family.

This is Protein RnfH from Neisseria gonorrhoeae (strain NCCP11945).